We begin with the raw amino-acid sequence, 196 residues long: Holliday junction branch migration complex subunit RuvA (196 aa).

Residues M1–A63 form a domain I region. Residues D64 to A142 form a domain II region. The interval V143–P151 is flexible linker. The tract at residues P151–K196 is domain III.

Belongs to the RuvA family. In terms of assembly, homotetramer. Forms an RuvA(8)-RuvB(12)-Holliday junction (HJ) complex. HJ DNA is sandwiched between 2 RuvA tetramers; dsDNA enters through RuvA and exits via RuvB. An RuvB hexamer assembles on each DNA strand where it exits the tetramer. Each RuvB hexamer is contacted by two RuvA subunits (via domain III) on 2 adjacent RuvB subunits; this complex drives branch migration. In the full resolvosome a probable DNA-RuvA(4)-RuvB(12)-RuvC(2) complex forms which resolves the HJ.

It localises to the cytoplasm. Functionally, the RuvA-RuvB-RuvC complex processes Holliday junction (HJ) DNA during genetic recombination and DNA repair, while the RuvA-RuvB complex plays an important role in the rescue of blocked DNA replication forks via replication fork reversal (RFR). RuvA specifically binds to HJ cruciform DNA, conferring on it an open structure. The RuvB hexamer acts as an ATP-dependent pump, pulling dsDNA into and through the RuvAB complex. HJ branch migration allows RuvC to scan DNA until it finds its consensus sequence, where it cleaves and resolves the cruciform DNA. The polypeptide is Holliday junction branch migration complex subunit RuvA (Mycobacterium sp. (strain JLS)).